The primary structure comprises 338 residues: MVDFKSIIAKVATGATLTRDEATDAFDAMMSGDATPSQMGALLMGLRVRGETVDEITGAVTTMRAKMLPVTAPPDAVDIVGTGGDGSGSVNVSTCASFVVAGCGVTVAKHGNRALSSKSGAADVLAALGVKIDITPEQVGRCVNEAGIGFMFAPTHHPAMKNVGPTRVELATRTIFNLLGPLSNPAGVKRQMIGVFSRQWVQPLAQVLKNLGSEAVWVVHGSDGLDEITLSGTTAVAELKNGEITSFEISPEDAGLPRAPADALKGGDAQANAVALRAVLEGMPGPYRDVALLNAAATLVVAGKARDLKEGVALGTQSIDSGAAEARLKKLIAVSAAA.

5-phospho-alpha-D-ribose 1-diphosphate contacts are provided by residues G81, 84–85 (GD), S89, 91–94 (NVST), 109–117 (KHGNRALSS), and A121. Residue G81 coordinates anthranilate. Residue S93 coordinates Mg(2+). N112 provides a ligand contact to anthranilate. Residue R167 coordinates anthranilate. Mg(2+)-binding residues include D226 and E227.

This sequence belongs to the anthranilate phosphoribosyltransferase family. As to quaternary structure, homodimer. The cofactor is Mg(2+).

The enzyme catalyses N-(5-phospho-beta-D-ribosyl)anthranilate + diphosphate = 5-phospho-alpha-D-ribose 1-diphosphate + anthranilate. It functions in the pathway amino-acid biosynthesis; L-tryptophan biosynthesis; L-tryptophan from chorismate: step 2/5. Catalyzes the transfer of the phosphoribosyl group of 5-phosphorylribose-1-pyrophosphate (PRPP) to anthranilate to yield N-(5'-phosphoribosyl)-anthranilate (PRA). This is Anthranilate phosphoribosyltransferase from Rhodopseudomonas palustris (strain TIE-1).